The sequence spans 67 residues: ATP synthase protein 8 (67 aa).

Residues Thr8–Met24 form a helical membrane-spanning segment. Lys54 is modified (N6-acetyllysine; alternate). Position 54 is an N6-succinyllysine; alternate (Lys54). Lys57 carries the N6-acetyllysine modification.

The protein belongs to the ATPase protein 8 family. In terms of assembly, F-type ATPases have 2 components, CF(1) - the catalytic core - and CF(0) - the membrane proton channel. Component of an ATP synthase complex composed of ATP5PB, ATP5MC1, ATP5F1E, ATP5PD, ATP5ME, ATP5PF, ATP5MF, MT-ATP6, MT-ATP8, ATP5F1A, ATP5F1B, ATP5F1D, ATP5F1C, ATP5PO, ATP5MG, ATP5MK and ATP5MJ. Interacts with PRICKLE3.

It is found in the mitochondrion membrane. Functionally, mitochondrial membrane ATP synthase (F(1)F(0) ATP synthase or Complex V) produces ATP from ADP in the presence of a proton gradient across the membrane which is generated by electron transport complexes of the respiratory chain. F-type ATPases consist of two structural domains, F(1) - containing the extramembraneous catalytic core and F(0) - containing the membrane proton channel, linked together by a central stalk and a peripheral stalk. During catalysis, ATP synthesis in the catalytic domain of F(1) is coupled via a rotary mechanism of the central stalk subunits to proton translocation. Part of the complex F(0) domain. Minor subunit located with subunit a in the membrane. The chain is ATP synthase protein 8 (MT-ATP8) from Artibeus jamaicensis (Jamaican fruit-eating bat).